The following is a 41-amino-acid chain: Large ribosomal subunit protein bL36 (41 aa).

It belongs to the bacterial ribosomal protein bL36 family.

This Granulibacter bethesdensis (strain ATCC BAA-1260 / CGDNIH1) protein is Large ribosomal subunit protein bL36.